A 520-amino-acid polypeptide reads, in one-letter code: MSVDIHSEKILILDFGSQYTQLIARRVREAHVYCELHPFDLELAAIRSFAPSGIILSGGPKSVYEEGAPAVAEELFELGVPVLGICYGMQLMSRHFGGEVVPAGKREFGHAELLAQGTPGPLFDGFFLDGKSPVWMSHGDHVSQVPEGFQVAAGTANAPVCAIQNLACNLYGVQFHPEVNHTPRGEQLIDTFVRKICGCSGKWTPGQIIEDAVARIKQQVGSDRVILGLSGGVDSSVAAALIHRAIGEQLTCVFVDNGLLRLGEGDQVMATFAQNLGVKVIRVDAEDRFLSALAGVSDPEKKRKIIGGLFVEIFEEESNKITDARWLAQGTIYPDVIESAGAKTGKAHNIKSHHNVGGLPEHMKLKLLEPLRELFKDEVRAIGEELGLPHQMVWRHPFPGPGLGVRILGEVRKDYADILRQADAIYIEELYAADHYHKISQAFAVFLPVKSVGVMGDGRTYEYVVALRAVETKDFMTAGWYPLPYEDLARISSRIINEVKGINRVVYDISSKPPATIEWE.

In terms of domain architecture, Glutamine amidotransferase type-1 spans 9–202 (KILILDFGSQ…VRKICGCSGK (194 aa)). The active-site Nucleophile is the cysteine 86. Catalysis depends on residues histidine 176 and glutamate 178. Positions 203 to 395 (WTPGQIIEDA…LGLPHQMVWR (193 aa)) constitute a GMPS ATP-PPase domain. ATP is bound at residue 230–236 (SGGVDSS).

In terms of assembly, homodimer.

It carries out the reaction XMP + L-glutamine + ATP + H2O = GMP + L-glutamate + AMP + diphosphate + 2 H(+). Its pathway is purine metabolism; GMP biosynthesis; GMP from XMP (L-Gln route): step 1/1. Functionally, catalyzes the synthesis of GMP from XMP. The sequence is that of GMP synthase [glutamine-hydrolyzing] from Geotalea daltonii (strain DSM 22248 / JCM 15807 / FRC-32) (Geobacter daltonii).